Here is a 115-residue protein sequence, read N- to C-terminus: Large ribosomal subunit protein bL19 (115 aa).

Belongs to the bacterial ribosomal protein bL19 family.

Functionally, this protein is located at the 30S-50S ribosomal subunit interface and may play a role in the structure and function of the aminoacyl-tRNA binding site. In Buchnera aphidicola subsp. Acyrthosiphon pisum (strain 5A), this protein is Large ribosomal subunit protein bL19.